The primary structure comprises 95 residues: MSRSSKKGPYVDIKLLDKIEAMNKANEKRAIRTWSRDSTIFPQMIGHTILVHDGRRHVPVYITENMVGHKLGEFAPTRFFRGHGGKKADKRGKVK.

It belongs to the universal ribosomal protein uS19 family.

Protein S19 forms a complex with S13 that binds strongly to the 16S ribosomal RNA. The sequence is that of Small ribosomal subunit protein uS19 from Chloroflexus aggregans (strain MD-66 / DSM 9485).